The chain runs to 254 residues: MSMQSNSSDASSATVDPAEIAKFSRLSAQWWDPTGKMAPLHKINPLRLSFIRDAACRKFERNAKSLNCLSGLRMIDIGCGAGLLCEPFTRLGAQVIGVDPSATNIAAAKLHAEKSQLLIDYRCTTVEQMDPRERFDIVLAMEVIEHVTDVGAFLARCAAITKPGGLMVVATLNRNWKSFALAIVGAEYVMRWLPRGTHQWDKFVTPDELTKHLHNNKLAVTEQAGLVYNPLADKWSLSADMDVNYMVVAETAAG.

Arg47, Gly78, Asp99, and Met141 together coordinate S-adenosyl-L-methionine.

The protein belongs to the methyltransferase superfamily. UbiG/COQ3 family.

The catalysed reaction is a 3-demethylubiquinol + S-adenosyl-L-methionine = a ubiquinol + S-adenosyl-L-homocysteine + H(+). The enzyme catalyses a 3-(all-trans-polyprenyl)benzene-1,2-diol + S-adenosyl-L-methionine = a 2-methoxy-6-(all-trans-polyprenyl)phenol + S-adenosyl-L-homocysteine + H(+). Its pathway is cofactor biosynthesis; ubiquinone biosynthesis. Its function is as follows. O-methyltransferase that catalyzes the 2 O-methylation steps in the ubiquinone biosynthetic pathway. This is Ubiquinone biosynthesis O-methyltransferase from Rhodopseudomonas palustris (strain BisB18).